The chain runs to 339 residues: Immunoglobulin-binding protein 1 (339 aa).

An N-acetylalanine modification is found at Ala2. In terms of domain architecture, UIM spans 46–60; sequence LDLLEKAAEMLSQLD. The interaction with PPP2CA stretch occupies residues 98–202; that stretch reads RLDHLQRARE…YLLHLQRWID (105 aa). 2 disordered regions span residues 221 to 243 and 289 to 339; these read RDSS…VKPF and APEE…QNMG. An interaction with MID1 region spans residues 225–290; sequence REASTSNSSR…PDQGIAKAAP (66 aa). Lys241 carries the post-translational modification N6-acetyllysine. Acidic residues predominate over residues 301–312; it reads EEQEEKEEEDDE. Residues 313–329 show a composition bias toward basic and acidic residues; the sequence is QTLHRAREWDDWKDTHP.

Belongs to the IGBP1/TAP42 family. As to quaternary structure, interacts with partially folded PPP2CA, but not with the fully active protein. Interacts with PPP2CB, and with PP4 and PP6. Interacts with MID1 and MID2. Interacts with ubiquitin. In terms of processing, phosphorylated. Monoubiquitination by MID1 triggers calpain-mediated cleavage and switches IGBP1 activity from protective to destructive. Ubiquitously expressed with highest levels in heart, skeletal muscle and pancreas.

It localises to the cytoplasm. In terms of biological role, associated to surface IgM-receptor; may be involved in signal transduction. Involved in regulation of the catalytic activity of the phosphatases PP2A, PP4 and PP6 by protecting their partially folded catalytic subunits from degradative polyubiquitination until they associate with regulatory subunits. This Homo sapiens (Human) protein is Immunoglobulin-binding protein 1 (IGBP1).